Here is a 137-residue protein sequence, read N- to C-terminus: Large ribosomal subunit protein uL11 (137 aa).

This sequence belongs to the universal ribosomal protein uL11 family. In terms of assembly, part of the ribosomal stalk of the 50S ribosomal subunit. Interacts with L10 and the large rRNA to form the base of the stalk. L10 forms an elongated spine to which L12 dimers bind in a sequential fashion forming a multimeric L10(L12)X complex. In terms of processing, one or more lysine residues are methylated.

Functionally, forms part of the ribosomal stalk which helps the ribosome interact with GTP-bound translation factors. This is Large ribosomal subunit protein uL11 from Mycoplasma pneumoniae (strain ATCC 29342 / M129 / Subtype 1) (Mycoplasmoides pneumoniae).